The primary structure comprises 142 residues: Chorion class A protein Ld12 (142 aa).

Residues 1-18 form the signal peptide; sequence MNSFALLLVCIQACLVQS.

It belongs to the chorion protein family.

Its function is as follows. This protein is one of many from the eggshell of the gypsy moth. This Lymantria dispar (Gypsy moth) protein is Chorion class A protein Ld12.